The sequence spans 320 residues: Cytochrome f (320 aa).

An N-terminal signal peptide occupies residues 1–35 (MHTKNLFYSRPQQITQYLSAFLMMVILTRTSISSA). Heme-binding residues include tyrosine 36, cysteine 56, cysteine 59, and histidine 60. The chain crosses the membrane as a helical span at residues 286 to 306 (VQVLLFFFASIILAQIFLVLK).

This sequence belongs to the cytochrome f family. As to quaternary structure, the 4 large subunits of the cytochrome b6-f complex are cytochrome b6, subunit IV (17 kDa polypeptide, petD), cytochrome f and the Rieske protein, while the 4 small subunits are PetG, PetL, PetM and PetN. The complex functions as a dimer. Heme serves as cofactor.

The protein resides in the plastid thylakoid membrane. Component of the cytochrome b6-f complex, which mediates electron transfer between photosystem II (PSII) and photosystem I (PSI), cyclic electron flow around PSI, and state transitions. The protein is Cytochrome f of Cuscuta obtusiflora (Peruvian dodder).